The sequence spans 59 residues: Large ribosomal subunit protein bL32 (59 aa).

It belongs to the bacterial ribosomal protein bL32 family.

The protein is Large ribosomal subunit protein bL32 of Limosilactobacillus reuteri (strain DSM 20016) (Lactobacillus reuteri).